The following is a 413-amino-acid chain: Na(+)-translocating NADH-quinone reductase subunit B (413 aa).

Transmembrane regions (helical) follow at residues 56–76, 123–143, and 169–189; these read MMILVWFAVFPAMFWGMYNVG, LLGAAYFLPIYAVVFLVGGFW, and IVPPTLPLWQAALGISFGVVI. FMN phosphoryl threonine is present on T236. 5 helical membrane passes run 270–290, 297–317, 322–342, 358–378, and 381–401; these read GSIGEVSTLMILIGGAIIIFG, IVAGVMIGMIATAYLFNWIGS, LFAMPWYWHLVLGGFAFGMIF, WWYGGLIGVMCILIRVANPAY, and GMMLAILFANLFAPLFDYVVV.

The protein belongs to the NqrB/RnfD family. As to quaternary structure, composed of six subunits; NqrA, NqrB, NqrC, NqrD, NqrE and NqrF. FMN is required as a cofactor.

It is found in the cell inner membrane. The enzyme catalyses a ubiquinone + n Na(+)(in) + NADH + H(+) = a ubiquinol + n Na(+)(out) + NAD(+). Its function is as follows. NQR complex catalyzes the reduction of ubiquinone-1 to ubiquinol by two successive reactions, coupled with the transport of Na(+) ions from the cytoplasm to the periplasm. NqrA to NqrE are probably involved in the second step, the conversion of ubisemiquinone to ubiquinol. This is Na(+)-translocating NADH-quinone reductase subunit B from Yersinia pestis.